The following is a 152-amino-acid chain: UPF0225 protein Ent638_2310 (152 aa).

It belongs to the UPF0225 family.

The sequence is that of UPF0225 protein Ent638_2310 from Enterobacter sp. (strain 638).